The primary structure comprises 635 residues: Allantoin permease (635 aa).

Residues 1–144 lie on the Cytoplasmic side of the membrane; the sequence is MANDALSAIF…AGTGLQLGLN (144 aa). A helical transmembrane segment spans residues 145-165; the sequence is WWQCWLTVWIGYTFAGIFVVL. Residues 166-174 are Extracellular-facing; sequence NSRFGSAYH. The chain crosses the membrane as a helical span at residues 175–195; that stretch reads LSFPITVRASFGIFFSMWPII. Residues 196–198 are Cytoplasmic-facing; the sequence is NRV. The chain crosses the membrane as a helical span at residues 199 to 219; that stretch reads VMAIVWYAVQAWLGATPVALM. Topologically, residues 220-243 are extracellular; it reads LKSIFGKNLEDRIPNHFGSPNSTT. A helical membrane pass occupies residues 244 to 264; sequence FEFMCFFIFWVVSIPFVLVAP. At 265-269 the chain is on the cytoplasmic side; sequence HKIRH. The helical transmembrane segment at 270–290 threads the bilayer; it reads LFTVKAALIPFAAFGFLIWAL. The Extracellular segment spans residues 291 to 311; the sequence is KKSHGKIELGTLNDYSPHGSE. The helical transmembrane segment at 312–332 threads the bilayer; sequence FSWIFVRSLMACVANFAALII. The Cytoplasmic portion of the chain corresponds to 333–351; sequence NAPDFGRFAKNPQASLWPQ. A helical transmembrane segment spans residues 352–372; that stretch reads LVAIPLFFAITCLIGIIVTAA. Over 373 to 401 the chain is Extracellular; that stretch reads GYHLYGVNYWSPLDVLGQFLETTYTRGTR. The chain crosses the membrane as a helical span at residues 402–422; the sequence is AGVFLISFVFALAQLGTNISA. Topologically, residues 423 to 443 are cytoplasmic; sequence NSLACGADMTALFPRYINIRR. A helical membrane pass occupies residues 444 to 464; sequence GSLFCVAMALCICPWNLMASS. At 465–466 the chain is on the extracellular side; sequence SK. A helical transmembrane segment spans residues 467 to 487; that stretch reads FTSALGAYAIFLSSIAGVICA. Topologically, residues 488–522 are cytoplasmic; the sequence is DYFVVRRGYVKLTHLFLAQKGSFYMFGNKFGANWR. Residues 523–543 traverse the membrane as a helical segment; it reads AFVAYICGIAPNLPGFIGDVG. Topologically, residues 544–560 are extracellular; sequence APKITVSEGAMRLYYLG. The chain crosses the membrane as a helical span at residues 561-581; sequence YPVGFFISAVIYLILCYFFPV. At 582–635 the chain is on the cytoplasmic side; the sequence is PGTPVTNFLTEKGWFQRWAYVEDFEQDWKNELRRDDLCDDTVSIYDGTEEKIVY.

The protein belongs to the purine-cytosine permease (2.A.39) family.

It localises to the membrane. In terms of biological role, transport of allantoin. This chain is Allantoin permease (DAL4), found in Saccharomyces cerevisiae (strain ATCC 204508 / S288c) (Baker's yeast).